The following is a 382-amino-acid chain: Mannitol-1-phosphate 5-dehydrogenase (382 aa).

Residue 3–14 participates in NAD(+) binding; it reads ALHFGAGNIGRG. An N6-acetyllysine modification is found at Lys269.

The protein belongs to the mannitol dehydrogenase family.

It carries out the reaction D-mannitol 1-phosphate + NAD(+) = beta-D-fructose 6-phosphate + NADH + H(+). In Escherichia coli (strain ATCC 8739 / DSM 1576 / NBRC 3972 / NCIMB 8545 / WDCM 00012 / Crooks), this protein is Mannitol-1-phosphate 5-dehydrogenase.